We begin with the raw amino-acid sequence, 435 residues long: Serine hydroxymethyltransferase (435 aa).

Residues leucine 133 and 137 to 139 (GHL) each bind (6S)-5,6,7,8-tetrahydrofolate. At lysine 242 the chain carries N6-(pyridoxal phosphate)lysine.

It belongs to the SHMT family. In terms of assembly, homodimer. Pyridoxal 5'-phosphate serves as cofactor.

Its subcellular location is the cytoplasm. The catalysed reaction is (6R)-5,10-methylene-5,6,7,8-tetrahydrofolate + glycine + H2O = (6S)-5,6,7,8-tetrahydrofolate + L-serine. It functions in the pathway one-carbon metabolism; tetrahydrofolate interconversion. The protein operates within amino-acid biosynthesis; glycine biosynthesis; glycine from L-serine: step 1/1. Its function is as follows. Catalyzes the reversible interconversion of serine and glycine with tetrahydrofolate (THF) serving as the one-carbon carrier. This reaction serves as the major source of one-carbon groups required for the biosynthesis of purines, thymidylate, methionine, and other important biomolecules. Also exhibits THF-independent aldolase activity toward beta-hydroxyamino acids, producing glycine and aldehydes, via a retro-aldol mechanism. This chain is Serine hydroxymethyltransferase, found in Hyphomonas neptunium (strain ATCC 15444).